We begin with the raw amino-acid sequence, 558 residues long: uncharacterized protein (558 aa).

Positions 47–78 form a coiled coil; the sequence is DFDDLNSIFKDFQKQKKNLKDNILKFYNKKKE. Disordered stretches follow at residues 239 to 266 and 424 to 447; these read NNNN…SKIE and NNNN…NSGE. The span at 245-266 shows a compositional bias: basic and acidic residues; sequence TETESEIESKSESESESESKIE. Over residues 424 to 444 the composition is skewed to low complexity; the sequence is NNNNNNNNNNNNNNNNNNNNN.

This is an uncharacterized protein from Dictyostelium discoideum (Social amoeba).